The chain runs to 665 residues: Transketolase (665 aa).

H26 serves as a coordination point for substrate. Residues H66 and 114–116 (GPL) each bind thiamine diphosphate. The disordered stretch occupies residues 94–114 (NSKTPGHPETGETPGVETTTG). Low complexity predominate over residues 97 to 114 (TPGHPETGETPGVETTTG). D155 contributes to the Mg(2+) binding site. Residues G156 and N185 each contribute to the thiamine diphosphate site. Mg(2+) is bound by residues N185 and I187. Substrate is bound by residues H261, R358, and S385. Residue H261 coordinates thiamine diphosphate. Catalysis depends on E411, which acts as the Proton donor. F437 provides a ligand contact to thiamine diphosphate. 3 residues coordinate substrate: H461, D469, and R520.

The protein belongs to the transketolase family. In terms of assembly, homodimer. Mg(2+) is required as a cofactor. The cofactor is Ca(2+). Mn(2+) serves as cofactor. Requires Co(2+) as cofactor. It depends on thiamine diphosphate as a cofactor.

It carries out the reaction D-sedoheptulose 7-phosphate + D-glyceraldehyde 3-phosphate = aldehydo-D-ribose 5-phosphate + D-xylulose 5-phosphate. Its function is as follows. Catalyzes the transfer of a two-carbon ketol group from a ketose donor to an aldose acceptor, via a covalent intermediate with the cofactor thiamine pyrophosphate. The sequence is that of Transketolase (tkt) from Buchnera aphidicola subsp. Acyrthosiphon pisum (strain APS) (Acyrthosiphon pisum symbiotic bacterium).